Consider the following 400-residue polypeptide: Protein phosphatase methylesterase 1 (400 aa).

The disordered stretch occupies residues 1–72 (MSDLQRTWAK…NQKLFARPQG (72 aa)). Positions 19-28 (PFDEPQEEQG) are enriched in acidic residues. Positions 44 to 54 (SSASSASSVSS) are enriched in low complexity. Residues 55-64 (TGTIIPSPNQ) show a composition bias toward polar residues. Active-site residues include S202, D228, and H358.

Belongs to the AB hydrolase superfamily.

The enzyme catalyses [phosphatase 2A protein]-C-terminal L-leucine methyl ester + H2O = [phosphatase 2A protein]-C-terminal L-leucine + methanol + H(+). Functionally, demethylates proteins that have been reversibly carboxymethylated. Demethylates the phosphatase PP2A catalytic subunit. The polypeptide is Protein phosphatase methylesterase 1 (PPE1) (Gibberella zeae (strain ATCC MYA-4620 / CBS 123657 / FGSC 9075 / NRRL 31084 / PH-1) (Wheat head blight fungus)).